A 604-amino-acid chain; its full sequence is Vacuolar protein sorting-associated protein 64 (604 aa).

A disordered region spans residues 1–89 (MVELEKRRRP…SVHQVSQQQQ (89 aa)). The Cytoplasmic portion of the chain corresponds to 1–578 (MVELEKRRRP…LGVVEGKRTR (578 aa)). A compositionally biased stretch (polar residues) spans 22–34 (DQSNSQGMTKTPE). 2 stretches are compositionally biased toward low complexity: residues 44 to 57 (RARS…SRSN) and 77 to 89 (SPPS…QQQQ). The region spanning 185–257 (LKLGRPVTNS…NGTFVNGVKI (73 aa)) is the FHA domain. Positions 404 to 563 (NLINMIKTLT…EEKKDTEDTL (160 aa)) form a coiled coil. The segment at 539-561 (INNDNNAKVKQNDSREEKKDTED) is disordered. A compositionally biased stretch (basic and acidic residues) spans 548-560 (KQNDSREEKKDTE). A helical; Anchor for type IV membrane protein transmembrane segment spans residues 579 to 598 (VSKGMLFGVVAISFGLVATA). Residues 599–604 (VKQLPQ) are Lumenal-facing.

Component of a complex at least composed of FAR3, FAR7, FAR8, FAR10, FAR11 and VPS64.

It is found in the endoplasmic reticulum membrane. Functionally, participates in the control of the reentry into the cell cycle following pheromone treatment. Involved in vacuolar protein sorting. The sequence is that of Vacuolar protein sorting-associated protein 64 (VPS64) from Saccharomyces cerevisiae (strain ATCC 204508 / S288c) (Baker's yeast).